The sequence spans 197 residues: Guanylate kinase (197 aa).

In terms of domain architecture, Guanylate kinase-like spans 6 to 191 (SKLIILSGPS…CVAQIEKIIS (186 aa)). ATP is bound at residue 13 to 20 (GPSGVGKG).

Belongs to the guanylate kinase family.

It is found in the cytoplasm. It catalyses the reaction GMP + ATP = GDP + ADP. Essential for recycling GMP and indirectly, cGMP. This chain is Guanylate kinase, found in Mesomycoplasma hyopneumoniae (strain 7448) (Mycoplasma hyopneumoniae).